We begin with the raw amino-acid sequence, 539 residues long: Oviduct-specific glycoprotein (539 aa).

An N-terminal signal peptide occupies residues 1–21; sequence MGKLLLWVGLLLMLKHHDGAA. A GH18 domain is found at 22-385; the sequence is HKLVCYFTNW…HTLNNLLVND (364 aa). A disulfide bond links Cys26 and Cys51. Chitin is bound by residues 71–72, 98–101, Tyr142, 211–214, and Trp355; these read PL, GGWN, and LSYD. N-linked (GlcNAc...) asparagine glycosylation is present at Asn402. 2 disordered regions span residues 433–480 and 503–539; these read TETH…KPLT and QKVT…LERL. Low complexity predominate over residues 440–457; the sequence is ATMTTTPRGETATPTRTP.

Belongs to the glycosyl hydrolase 18 family. In terms of tissue distribution, oviduct.

The protein localises to the cytoplasmic vesicle. It localises to the secretory vesicle. Its function is as follows. Binds to oocyte zona pellucida in vivo. May play a role in the fertilization process and/or early embryonic development. This Ovis aries (Sheep) protein is Oviduct-specific glycoprotein (OVGP1).